The primary structure comprises 184 residues: Adenylate kinase (184 aa).

12 to 17 provides a ligand contact to ATP; that stretch reads GAGKGT. An NMP region spans residues 32 to 61; that stretch reads STGELLRKEIDLDTDLGKQVKDIMNRGELV. AMP is bound by residues threonine 33, arginine 38, 59–61, 85–88, and glutamine 92; these read ELV and GYPR. The LID stretch occupies residues 126-132; that stretch reads IRGRKDD. Arginine 127 provides a ligand contact to ATP. AMP is bound by residues arginine 129 and arginine 140. Glycine 168 is a binding site for ATP.

The protein belongs to the adenylate kinase family. In terms of assembly, monomer.

It localises to the cytoplasm. The enzyme catalyses AMP + ATP = 2 ADP. Its pathway is purine metabolism; AMP biosynthesis via salvage pathway; AMP from ADP: step 1/1. In terms of biological role, catalyzes the reversible transfer of the terminal phosphate group between ATP and AMP. Plays an important role in cellular energy homeostasis and in adenine nucleotide metabolism. In Prochlorococcus marinus subsp. pastoris (strain CCMP1986 / NIES-2087 / MED4), this protein is Adenylate kinase.